A 183-amino-acid chain; its full sequence is 2-C-methyl-D-erythritol 2,4-cyclodiphosphate synthase (183 aa).

A divalent metal cation-binding residues include D10 and H12. Residues 10-12 (DVH) and 38-39 (HS) each bind 4-CDP-2-C-methyl-D-erythritol 2-phosphate. A divalent metal cation is bound at residue H46. 4-CDP-2-C-methyl-D-erythritol 2-phosphate is bound by residues 60–62 (DIG) and 65–69 (FPDTD).

Belongs to the IspF family. In terms of assembly, homotrimer. The cofactor is a divalent metal cation.

The catalysed reaction is 4-CDP-2-C-methyl-D-erythritol 2-phosphate = 2-C-methyl-D-erythritol 2,4-cyclic diphosphate + CMP. Its pathway is isoprenoid biosynthesis; isopentenyl diphosphate biosynthesis via DXP pathway; isopentenyl diphosphate from 1-deoxy-D-xylulose 5-phosphate: step 4/6. Involved in the biosynthesis of isopentenyl diphosphate (IPP) and dimethylallyl diphosphate (DMAPP), two major building blocks of isoprenoid compounds. Catalyzes the conversion of 4-diphosphocytidyl-2-C-methyl-D-erythritol 2-phosphate (CDP-ME2P) to 2-C-methyl-D-erythritol 2,4-cyclodiphosphate (ME-CPP) with a corresponding release of cytidine 5-monophosphate (CMP). This Verminephrobacter eiseniae (strain EF01-2) protein is 2-C-methyl-D-erythritol 2,4-cyclodiphosphate synthase.